Here is a 167-residue protein sequence, read N- to C-terminus: UPF0102 protein RB9115 (167 aa).

Belongs to the UPF0102 family.

The sequence is that of UPF0102 protein RB9115 from Rhodopirellula baltica (strain DSM 10527 / NCIMB 13988 / SH1).